Consider the following 172-residue polypeptide: 3-hydroxydecanoyl-[acyl-carrier-protein] dehydratase (172 aa).

The active site involves H71.

It belongs to the thioester dehydratase family. FabA subfamily. As to quaternary structure, homodimer.

It is found in the cytoplasm. It catalyses the reaction a (3R)-hydroxyacyl-[ACP] = a (2E)-enoyl-[ACP] + H2O. The enzyme catalyses (3R)-hydroxydecanoyl-[ACP] = (2E)-decenoyl-[ACP] + H2O. The catalysed reaction is (2E)-decenoyl-[ACP] = (3Z)-decenoyl-[ACP]. It participates in lipid metabolism; fatty acid biosynthesis. Functionally, necessary for the introduction of cis unsaturation into fatty acids. Catalyzes the dehydration of (3R)-3-hydroxydecanoyl-ACP to E-(2)-decenoyl-ACP and then its isomerization to Z-(3)-decenoyl-ACP. Can catalyze the dehydratase reaction for beta-hydroxyacyl-ACPs with saturated chain lengths up to 16:0, being most active on intermediate chain length. The polypeptide is 3-hydroxydecanoyl-[acyl-carrier-protein] dehydratase (Pseudoalteromonas atlantica (strain T6c / ATCC BAA-1087)).